Consider the following 599-residue polypeptide: Elongation factor 4 (599 aa).

The region spanning 2-184 (KNIRNFSIIA…RLVRDIPPPQ (183 aa)) is the tr-type G domain. GTP-binding positions include 14–19 (DHGKST) and 131–134 (NKID).

The protein belongs to the TRAFAC class translation factor GTPase superfamily. Classic translation factor GTPase family. LepA subfamily.

The protein localises to the cell inner membrane. It catalyses the reaction GTP + H2O = GDP + phosphate + H(+). Required for accurate and efficient protein synthesis under certain stress conditions. May act as a fidelity factor of the translation reaction, by catalyzing a one-codon backward translocation of tRNAs on improperly translocated ribosomes. Back-translocation proceeds from a post-translocation (POST) complex to a pre-translocation (PRE) complex, thus giving elongation factor G a second chance to translocate the tRNAs correctly. Binds to ribosomes in a GTP-dependent manner. The sequence is that of Elongation factor 4 from Salmonella paratyphi C (strain RKS4594).